Here is a 590-residue protein sequence, read N- to C-terminus: Aspartate--tRNA ligase (590 aa).

Glu174 provides a ligand contact to L-aspartate. The aspartate stretch occupies residues 198–201 (QLMK). L-aspartate is bound at residue Arg220. Residues 220-222 (RDE) and Gln229 each bind ATP. Residue His443 coordinates L-aspartate. Residue Glu484 participates in ATP binding. Position 491 (Arg491) interacts with L-aspartate. 536–539 (GLDR) provides a ligand contact to ATP.

The protein belongs to the class-II aminoacyl-tRNA synthetase family. Type 1 subfamily. Homodimer.

Its subcellular location is the cytoplasm. The enzyme catalyses tRNA(Asp) + L-aspartate + ATP = L-aspartyl-tRNA(Asp) + AMP + diphosphate. Functionally, catalyzes the attachment of L-aspartate to tRNA(Asp) in a two-step reaction: L-aspartate is first activated by ATP to form Asp-AMP and then transferred to the acceptor end of tRNA(Asp). This chain is Aspartate--tRNA ligase, found in Lactococcus lactis subsp. cremoris (strain MG1363).